The primary structure comprises 518 residues: Serine/threonine-protein kinase UL13 (518 aa).

The interval 1-119 is disordered; the sequence is MDESRRQRPA…QAALTAPPSS (119 aa). The region spanning 151–518 is the Protein kinase domain; it reads PGARSFGGSG…TNPCARHALS (368 aa). ATP-binding positions include 157–165 and lysine 176; that span reads GGSGGYGDV. Aspartate 277 functions as the Proton acceptor in the catalytic mechanism.

The protein belongs to the protein kinase superfamily. Ser/Thr protein kinase family. Autophosphorylated.

Its subcellular location is the virion tegument. It localises to the host nucleus. The enzyme catalyses L-seryl-[protein] + ATP = O-phospho-L-seryl-[protein] + ADP + H(+). The catalysed reaction is L-threonyl-[protein] + ATP = O-phospho-L-threonyl-[protein] + ADP + H(+). Multifunctional serine/threonine kinase that plays a role in several processes including egress of virus particles from the nucleus, modulation of the actin cytoskeleton and regulation of viral and cellular gene expression. Regulates the nuclear localization of viral envelopment factors UL34 and UL31, by phosphorylating the US3 kinase, indicating a role in nuclear egress. Disrupts host nuclear lamins, including LMNA and LMNB1. Phosphorylates the viral Fc receptor composed of glycoproteins E (gE) and I (gI). Phosphorylation of glycoprotein E (gE) by UL13 alters its subcellular localization, from the host early endosome to the plasma membrane. Participates in the transcriptional regulation of cellular and viral mRNAs mainly by phosphorylating the viral transcriptional regulator ICP22. Additional substrates have been identified, including UL41, UL49 or host EF1D. The protein is Serine/threonine-protein kinase UL13 of Homo sapiens (Human).